Reading from the N-terminus, the 629-residue chain is Carboxypeptidase Y homolog ARB_06361 (629 aa).

The signal sequence occupies residues 1-18 (MLITWLLDVLLLAPPVAA). N-linked (GlcNAc...) asparagine glycans are attached at residues Asn157 and Asn197. Ser235 is an active-site residue. A disulfide bond links Cys326 and Cys355. Residues Asn405 and Asn418 are each glycosylated (N-linked (GlcNAc...) asparagine). Residue Asp453 is part of the active site. Cys456 is a binding site for substrate. Residues Asn463 and Asn554 are each glycosylated (N-linked (GlcNAc...) asparagine).

The protein belongs to the peptidase S10 family.

The protein resides in the secreted. It carries out the reaction Release of a C-terminal amino acid with broad specificity.. Its function is as follows. Involved in degradation of small peptides. The polypeptide is Carboxypeptidase Y homolog ARB_06361 (Arthroderma benhamiae (strain ATCC MYA-4681 / CBS 112371) (Trichophyton mentagrophytes)).